Here is a 65-residue protein sequence, read N- to C-terminus: Light-harvesting protein B-800-850 alpha chain C (65 aa).

Over M1–S11 the chain is Cytoplasmic. Residues P12–L35 form a helical membrane-spanning segment. H31 contributes to the a bacteriochlorophyll binding site. The Periplasmic portion of the chain corresponds to E36–K65.

Belongs to the antenna complex alpha subunit family. The core complex is formed by different alpha and beta chains, binding bacteriochlorophyll molecules, and arranged most probably in tetrameric structures disposed around the reaction center. The non-pigmented gamma chains may constitute additional components.

Its subcellular location is the cell inner membrane. In terms of biological role, antenna complexes are light-harvesting systems, which transfer the excitation energy to the reaction centers. The sequence is that of Light-harvesting protein B-800-850 alpha chain C (pucAC) from Rhodopseudomonas palustris.